A 1517-amino-acid polypeptide reads, in one-letter code: DNA-directed RNA polymerase subunit beta' (1517 aa).

Positions 71, 73, 86, and 89 each coordinate Zn(2+). The Mg(2+) site is built by Asp482, Asp484, and Asp486. Positions 812, 886, 893, and 896 each coordinate Zn(2+).

The protein belongs to the RNA polymerase beta' chain family. As to quaternary structure, the RNAP catalytic core consists of 2 alpha, 1 beta, 1 beta' and 1 omega subunit. When a sigma factor is associated with the core the holoenzyme is formed, which can initiate transcription. The cofactor is Mg(2+). Requires Zn(2+) as cofactor.

It carries out the reaction RNA(n) + a ribonucleoside 5'-triphosphate = RNA(n+1) + diphosphate. In terms of biological role, DNA-dependent RNA polymerase catalyzes the transcription of DNA into RNA using the four ribonucleoside triphosphates as substrates. The protein is DNA-directed RNA polymerase subunit beta' of Campylobacter jejuni subsp. jejuni serotype O:6 (strain 81116 / NCTC 11828).